A 454-amino-acid chain; its full sequence is MRTTGFSGLLSATVVGVYVLVVVGATAALADAAAACQGWPLCGGDLSDPSVPVAVLHRGVAAVVGLLVIATAVVGWSETTARVKTTLALALALYPAQVVLGALVATGSALANLHLFVAMAIFAVLVVGLAWHLEAETGSDDAPESPPELAPPVDEEPAATEQPALSGLARAKATARAYFELTKPRLMWLLCLVAGAGMVIAGTPTVRTVVFTLGGGVLAIGASGTFNHVLERDIDRRMERTSDRPIATHEVPVANALAFGGLLAVASLWAFLSVNLLAAALGLAAIAFYSVVYTLILKPNTVQNTVIGGAAGALPALIGYAAVTGTIGIGGLVLAAVIFLWTPAHFYNLALAYKDDYERGGFPMMPVVRGETETRKHIVFYLGATLLGAGALAAVTDLGWLYAATAVLAAGVFLWAVVELHYEQTDRAAFRSFHASNAYLGLVLVAILIDSLAV.

The interval 1-186 (MRTTGFSGLL…AYFELTKPRL (186 aa)) is unknown. The next 4 membrane-spanning stretches (helical) occupy residues 9 to 29 (LLSATVVGVYVLVVVGATAAL), 59 to 79 (GVAAVVGLLVIATAVVGWSET), 87 to 107 (LALALALYPAQVVLGALVATG), and 113 to 133 (LHLFVAMAIFAVLVVGLAWHL). The interval 137 to 164 (TGSDDAPESPPELAPPVDEEPAATEQPA) is disordered. Transmembrane regions (helical) follow at residues 186–206 (LMWLLCLVAGAGMVIAGTPTV), 209–229 (VVFTLGGGVLAIGASGTFNHV), 251–271 (VPVANALAFGGLLAVASLWAF), 276–296 (LLAAALGLAAIAFYSVVYTLI), 300–320 (NTVQNTVIGGAAGALPALIGY), 321–341 (AAVTGTIGIGGLVLAAVIFLW), 377–397 (HIVFYLGATLLGAGALAAVTD), 398–418 (LGWLYAATAVLAAGVFLWAVV), and 433–453 (FHASNAYLGLVLVAILIDSLA). Residues 187–451 (MWLLCLVAGA…LVLVAILIDS (265 aa)) form a protoheme IX prenyltransferase region.

The protein in the C-terminal section; belongs to the UbiA prenyltransferase family. Protoheme IX farnesyltransferase subfamily.

Its subcellular location is the cell membrane. The enzyme catalyses heme b + (2E,6E)-farnesyl diphosphate + H2O = Fe(II)-heme o + diphosphate. It participates in porphyrin-containing compound metabolism; heme O biosynthesis; heme O from protoheme: step 1/1. In terms of biological role, converts heme B (protoheme IX) to heme O by substitution of the vinyl group on carbon 2 of heme B porphyrin ring with a hydroxyethyl farnesyl side group. In Natronomonas pharaonis (strain ATCC 35678 / DSM 2160 / CIP 103997 / JCM 8858 / NBRC 14720 / NCIMB 2260 / Gabara) (Halobacterium pharaonis), this protein is Protoheme IX farnesyltransferase 1 (ctaB1).